A 233-amino-acid chain; its full sequence is Methyltransferase srdJ (233 aa).

The tract at residues 1–32 (MFQVQTAGTRTGTSSPDTTTSEAGLGSTPPMP) is disordered. Residues 9-21 (TRTGTSSPDTTTS) are compositionally biased toward low complexity. S-adenosyl-L-methionine is bound by residues Trp40, Trp52, and Gly81. A Required for methyltransferase activity motif is present at residues 140–146 (EISSQKY).

It belongs to the methyltransferase superfamily.

Its function is as follows. Methyltransferase; part of the gene cluster that mediates the biosynthesis of sordarial, a salicylic aldehyde structurally related to the phytotoxin pyriculol. The most interesting aspect of this pathway is formation of an aromatic product from the highly reducing polyketide synthase srdA. SrdA synthesizes a reduced polyketide chain from one molecule of acetyl-CoA and five molecules of malonyl-CoA. The polyketide chain is then reductively released as an aldehyde. The oxidoreductases srdC, srdD and srdE then oxidize one of the hydroxy groups to facilitate the intramolecular aldol condensation, followed by dehydration to yield a salicylic aldehyde. This aldehyde can undergo facile reduction by endogenous reductases to yield the alcohol 1-hydroxy-2-hydroxymethyl-3-pent-1,3-dienylbenzene. The flavin-dependent srdI counteract against the propensity of the aldehydes to be reduced under physiological conditions and is responsible for reoxidizing 1-hydroxy-2-hydroxymethyl-3-pent-1,3-dienylbenzene back to the salicylic aldehyde. This salicylic aldehyde is then selectively epoxidized by the cupin-domain-containing oxidoreductase srdB to yield the epoxide, which can be hydrolyzed stereoselectively by the hydrolase srdG to give the final product sordarial. The polypeptide is Methyltransferase srdJ (Neurospora crassa (strain ATCC 24698 / 74-OR23-1A / CBS 708.71 / DSM 1257 / FGSC 987)).